We begin with the raw amino-acid sequence, 214 residues long: Adenylate kinase (214 aa).

Position 10-15 (10-15 (GVGKGT)) interacts with ATP. Residues 30 to 59 (STGDILRAAVKELTPMGAKAKGYMDSGALV) form an NMP region. AMP-binding positions include Thr-31, Arg-36, 57 to 59 (ALV), 85 to 88 (GFPR), and Gln-92. The LID stretch occupies residues 126-163 (GRRACANCGAGYHVDFAPSKVAGVCDACSGQLVQREDD). Arg-127 serves as a coordination point for ATP. Positions 130, 133, 150, and 153 each coordinate Zn(2+). AMP is bound by residues Arg-160 and Arg-171. Residue Gly-199 participates in ATP binding.

It belongs to the adenylate kinase family. In terms of assembly, monomer.

The protein resides in the cytoplasm. The catalysed reaction is AMP + ATP = 2 ADP. The protein operates within purine metabolism; AMP biosynthesis via salvage pathway; AMP from ADP: step 1/1. Its function is as follows. Catalyzes the reversible transfer of the terminal phosphate group between ATP and AMP. Plays an important role in cellular energy homeostasis and in adenine nucleotide metabolism. This Citrifermentans bemidjiense (strain ATCC BAA-1014 / DSM 16622 / JCM 12645 / Bem) (Geobacter bemidjiensis) protein is Adenylate kinase.